The following is a 354-amino-acid chain: RNA 3'-terminal phosphate cyclase (354 aa).

ATP-binding positions include Gln-100 and 290–293; that span reads HMGD. His-316 acts as the Tele-AMP-histidine intermediate in catalysis.

Belongs to the RNA 3'-terminal cyclase family. Type 1 subfamily.

The protein localises to the cytoplasm. It carries out the reaction a 3'-end 3'-phospho-ribonucleotide-RNA + ATP = a 3'-end 2',3'-cyclophospho-ribonucleotide-RNA + AMP + diphosphate. In terms of biological role, catalyzes the conversion of 3'-phosphate to a 2',3'-cyclic phosphodiester at the end of RNA. The mechanism of action of the enzyme occurs in 3 steps: (A) adenylation of the enzyme by ATP; (B) transfer of adenylate to an RNA-N3'P to produce RNA-N3'PP5'A; (C) and attack of the adjacent 2'-hydroxyl on the 3'-phosphorus in the diester linkage to produce the cyclic end product. The biological role of this enzyme is unknown but it is likely to function in some aspects of cellular RNA processing. This Caldivirga maquilingensis (strain ATCC 700844 / DSM 13496 / JCM 10307 / IC-167) protein is RNA 3'-terminal phosphate cyclase.